Here is a 293-residue protein sequence, read N- to C-terminus: Histamine N-methyltransferase B (293 aa).

Glu-28 provides a ligand contact to substrate. 5 residues coordinate S-adenosyl-L-methionine: Gly-60, Glu-89, Gln-94, Ser-120, and Ile-142. Residue Asn-283 coordinates substrate.

Belongs to the class I-like SAM-binding methyltransferase superfamily. HNMT family. As to quaternary structure, monomer.

It localises to the cytoplasm. It catalyses the reaction histamine + S-adenosyl-L-methionine = N(tau)-methylhistamine + S-adenosyl-L-homocysteine + H(+). Inactivates histamine by N-methylation. Plays an important role in degrading histamine and in regulating the airway response to histamine. The protein is Histamine N-methyltransferase B (hnmt-b) of Xenopus laevis (African clawed frog).